Reading from the N-terminus, the 361-residue chain is Queuine tRNA-ribosyltransferase (361 aa).

The active-site Proton acceptor is Asp-92. Residues 92-96 (DSGGF), Asp-146, Gln-189, and Gly-216 each bind substrate. Positions 247–253 (GVGKPAD) are RNA binding. Residue Asp-266 is the Nucleophile of the active site. Positions 271–275 (TRSGR) are RNA binding; important for wobble base 34 recognition. Residues Cys-304, Cys-306, Cys-309, and His-335 each coordinate Zn(2+).

This sequence belongs to the queuine tRNA-ribosyltransferase family. In terms of assembly, homodimer. Within each dimer, one monomer is responsible for RNA recognition and catalysis, while the other monomer binds to the replacement base PreQ1. Requires Zn(2+) as cofactor.

It catalyses the reaction 7-aminomethyl-7-carbaguanine + guanosine(34) in tRNA = 7-aminomethyl-7-carbaguanosine(34) in tRNA + guanine. It functions in the pathway tRNA modification; tRNA-queuosine biosynthesis. In terms of biological role, catalyzes the base-exchange of a guanine (G) residue with the queuine precursor 7-aminomethyl-7-deazaguanine (PreQ1) at position 34 (anticodon wobble position) in tRNAs with GU(N) anticodons (tRNA-Asp, -Asn, -His and -Tyr). Catalysis occurs through a double-displacement mechanism. The nucleophile active site attacks the C1' of nucleotide 34 to detach the guanine base from the RNA, forming a covalent enzyme-RNA intermediate. The proton acceptor active site deprotonates the incoming PreQ1, allowing a nucleophilic attack on the C1' of the ribose to form the product. After dissociation, two additional enzymatic reactions on the tRNA convert PreQ1 to queuine (Q), resulting in the hypermodified nucleoside queuosine (7-(((4,5-cis-dihydroxy-2-cyclopenten-1-yl)amino)methyl)-7-deazaguanosine). In Rickettsia felis (strain ATCC VR-1525 / URRWXCal2) (Rickettsia azadi), this protein is Queuine tRNA-ribosyltransferase.